A 314-amino-acid chain; its full sequence is MPRTDNDSWTITESVGATALGVAAARAAETESENPLIEDPFARVFVDAAGDGMWSMFANPALLAGAPEIESQVGARVRQMIDFMATRTAFFDEFFLGAADTGVRQVVILASGLDSRAWRLPWPDGTVVYELDQPRVLEFKSATLRQHGARPTAQLVNIPIDLRQDWPAALLDSGFDASKPTAWSAEGLVRYLPARAQDLLFERIDTLSPAGSWLATNVPQEGFSDPDLVRRQHEEMQRMRAAAGRLVEIQMPAVEDLWYAEERTPVADWLGEHGWRASATTSAELLTRYGRPVPDDAEGPVPPTLFVSAHRPAA.

S-adenosyl-L-methionine contacts are provided by residues Asp-132 and 161-162; that span reads DL.

It belongs to the UPF0677 family.

Its function is as follows. Exhibits S-adenosyl-L-methionine-dependent methyltransferase activity. The chain is Putative S-adenosyl-L-methionine-dependent methyltransferase MMAR_5323 from Mycobacterium marinum (strain ATCC BAA-535 / M).